The following is a 465-amino-acid chain: MKEPDAIKLFVGQIPRHLEEKDLKPIFEQFGRIFELTVIKDKYTGLHKGCAFLTYCARDSALKAQSALHEQKTLPGMNRPIQVKPADSESRGEDRKLFVGMLGKQQTDEDVRKMFEPFGTIDECTVLRGPDGTSKGCAFVKFQTHAEAQAAINTLHSSRTLPGASSSLVVKFADTEKERGLRRMQQVATQLGMFSPIALQFGAYSAYTQALMQQQAALVAAHSAYLSPMATMAAVQMQHMAAINANGLIATPITPSSGTSTPPAIAATPVSAIPAALGVNGYSPVPTQPTGQPAPDALYPNGVHPYPAQSPAAPVDPLQQAYAGMQHYTAAYPAAYSLVAPAFPQPPALVAQQPPPPPQQQQQQQQQQQQQQQREGPDGCNIFIYHLPQEFTDSEILQMFVPFGHVISAKVFVDRATNQSKCFGFVSFDNPASAQAAIQAMNGFQIGMKRLKVQLKRPKDANRPY.

RRM domains lie at 7–88 and 95–175; these read IKLF…PADS and RKLF…FADT. The span at 346–359 shows a compositional bias: pro residues; sequence PPALVAQQPPPPPQ. Residues 346 to 379 are disordered; the sequence is PPALVAQQPPPPPQQQQQQQQQQQQQQQREGPDG. A compositionally biased stretch (low complexity) spans 360-373; it reads QQQQQQQQQQQQQQ. One can recognise an RRM 3 domain in the interval 380–458; the sequence is CNIFIYHLPQ…KRLKVQLKRP (79 aa).

Belongs to the CELF/BRUNOL family. As to expression, expressed in brain.

Its subcellular location is the nucleus. The protein localises to the cytoplasm. RNA-binding protein involved in the regulation of pre-mRNA alternative splicing. Mediates exon inclusion and/or exclusion in pre-mRNA that are subject to tissue-specific and developmentally regulated alternative splicing. Specifically activates exon 5 inclusion of cardiac isoforms of TNNT2 during heart remodeling at the juvenile to adult transition. Activates the splicing of MAPT/Tau exon 10. Binds to muscle-specific splicing enhancer (MSE) intronic sites flanking the alternative exon 5 of TNNT2 pre-mRNA. The sequence is that of CUGBP Elav-like family member 3 (CELF3) from Homo sapiens (Human).